The chain runs to 61 residues: Large ribosomal subunit protein uL30 (61 aa).

Belongs to the universal ribosomal protein uL30 family. In terms of assembly, part of the 50S ribosomal subunit.

The chain is Large ribosomal subunit protein uL30 from Methylococcus capsulatus (strain ATCC 33009 / NCIMB 11132 / Bath).